Here is a 351-residue protein sequence, read N- to C-terminus: Biotin synthase (351 aa).

One can recognise a Radical SAM core domain in the interval Pro73–Arg298. Residues Cys88, Cys92, and Cys95 each coordinate [4Fe-4S] cluster. [2Fe-2S] cluster contacts are provided by Cys131, Cys164, Cys223, and Arg293.

It belongs to the radical SAM superfamily. Biotin synthase family. As to quaternary structure, homodimer. The cofactor is [4Fe-4S] cluster. Requires [2Fe-2S] cluster as cofactor.

The catalysed reaction is (4R,5S)-dethiobiotin + (sulfur carrier)-SH + 2 reduced [2Fe-2S]-[ferredoxin] + 2 S-adenosyl-L-methionine = (sulfur carrier)-H + biotin + 2 5'-deoxyadenosine + 2 L-methionine + 2 oxidized [2Fe-2S]-[ferredoxin]. The protein operates within cofactor biosynthesis; biotin biosynthesis; biotin from 7,8-diaminononanoate: step 2/2. Its function is as follows. Catalyzes the conversion of dethiobiotin (DTB) to biotin by the insertion of a sulfur atom into dethiobiotin via a radical-based mechanism. This Frankia alni (strain DSM 45986 / CECT 9034 / ACN14a) protein is Biotin synthase.